A 190-amino-acid polypeptide reads, in one-letter code: Peptidyl-tRNA hydrolase (190 aa).

Phe-14 lines the tRNA pocket. Residue His-19 is the Proton acceptor of the active site. Residues Met-64, Asn-66, and Asn-112 each coordinate tRNA.

It belongs to the PTH family. Monomer.

It localises to the cytoplasm. The catalysed reaction is an N-acyl-L-alpha-aminoacyl-tRNA + H2O = an N-acyl-L-amino acid + a tRNA + H(+). Hydrolyzes ribosome-free peptidyl-tRNAs (with 1 or more amino acids incorporated), which drop off the ribosome during protein synthesis, or as a result of ribosome stalling. Its function is as follows. Catalyzes the release of premature peptidyl moieties from peptidyl-tRNA molecules trapped in stalled 50S ribosomal subunits, and thus maintains levels of free tRNAs and 50S ribosomes. This chain is Peptidyl-tRNA hydrolase, found in Staphylococcus epidermidis (strain ATCC 35984 / DSM 28319 / BCRC 17069 / CCUG 31568 / BM 3577 / RP62A).